Reading from the N-terminus, the 289-residue chain is Nucleotide-binding protein COPRO5265_0725 (289 aa).

9 to 16 (GLSGAGKS) provides a ligand contact to ATP. A GTP-binding site is contributed by 59 to 62 (DSRS).

It belongs to the RapZ-like family.

Its function is as follows. Displays ATPase and GTPase activities. The sequence is that of Nucleotide-binding protein COPRO5265_0725 from Coprothermobacter proteolyticus (strain ATCC 35245 / DSM 5265 / OCM 4 / BT).